A 396-amino-acid chain; its full sequence is Alanine racemase (396 aa).

Lysine 46 acts as the Proton acceptor; specific for D-alanine in catalysis. Residue lysine 46 is modified to N6-(pyridoxal phosphate)lysine. Arginine 145 lines the substrate pocket. Tyrosine 280 functions as the Proton acceptor; specific for L-alanine in the catalytic mechanism. Methionine 328 contacts substrate.

The protein belongs to the alanine racemase family. The cofactor is pyridoxal 5'-phosphate.

It catalyses the reaction L-alanine = D-alanine. The protein operates within amino-acid biosynthesis; D-alanine biosynthesis; D-alanine from L-alanine: step 1/1. Its function is as follows. Catalyzes the interconversion of L-alanine and D-alanine. May also act on other amino acids. The chain is Alanine racemase (alr) from Brucella suis (strain ATCC 23445 / NCTC 10510).